Reading from the N-terminus, the 344-residue chain is UDP-glycosyltransferase 73C4 (344 aa).

UDP-alpha-D-glucose contacts are provided by residues Ser145, 202–203 (WA), 220–228 (HCGWNSSLE), and 242–245 (FAEQ).

This sequence belongs to the UDP-glycosyltransferase family. Expressed in flowers and fruits.

Its subcellular location is the cytoplasm. The protein resides in the nucleus. Its function is as follows. Probable glucosyltransferase that cannot glycosylate abscisic acid (ABA) and auxin (IAA). The protein is UDP-glycosyltransferase 73C4 of Solanum lycopersicum (Tomato).